The chain runs to 459 residues: Argininosuccinate lyase (459 aa).

This sequence belongs to the lyase 1 family. Argininosuccinate lyase subfamily.

The protein localises to the cytoplasm. It catalyses the reaction 2-(N(omega)-L-arginino)succinate = fumarate + L-arginine. Its pathway is amino-acid biosynthesis; L-arginine biosynthesis; L-arginine from L-ornithine and carbamoyl phosphate: step 3/3. The polypeptide is Argininosuccinate lyase (Prochlorococcus marinus (strain AS9601)).